The following is a 291-amino-acid chain: ATP synthase subunit a (291 aa).

Transmembrane regions (helical) follow at residues 47-67 (FTNL…LVFV), 140-160 (HFLI…IVGF), 167-187 (FFSF…LVLL), 207-227 (MMAG…MLFL), and 230-250 (IFYF…TGLE).

It belongs to the ATPase A chain family. In terms of assembly, F-type ATPases have 2 components, CF(1) - the catalytic core - and CF(0) - the membrane proton channel. CF(1) has five subunits: alpha(3), beta(3), gamma(1), delta(1), epsilon(1). CF(0) has three main subunits: a, b and c.

Its subcellular location is the mitochondrion inner membrane. Its function is as follows. Mitochondrial membrane ATP synthase (F(1)F(0) ATP synthase or Complex V) produces ATP from ADP in the presence of a proton gradient across the membrane which is generated by electron transport complexes of the respiratory chain. F-type ATPases consist of two structural domains, F(1) - containing the extramembraneous catalytic core and F(0) - containing the membrane proton channel, linked together by a central stalk and a peripheral stalk. During catalysis, ATP synthesis in the catalytic domain of F(1) is coupled via a rotary mechanism of the central stalk subunits to proton translocation. Key component of the proton channel; it may play a direct role in the translocation of protons across the membrane. This chain is ATP synthase subunit a (ATP6), found in Zea mays (Maize).